Consider the following 227-residue polypeptide: Charged multivesicular body protein 4b (227 aa).

2 disordered regions span residues 1–26 (MSGILGKLFGAGAGGKGAGKGPSPQE) and 186–227 (SGPE…AGNM). The span at 9-20 (FGAGAGGKGAGK) shows a compositional bias: gly residues. Residues 25 to 185 (QEAIQRLRDT…EELDKNLLEI (161 aa)) adopt a coiled-coil conformation.

It belongs to the SNF7 family. In terms of assembly, probable core component of the endosomal sorting required for transport complex III (ESCRT-III). ESCRT-III components are thought to multimerize to form a flat lattice on the perimeter membrane of the endosome.

Its subcellular location is the cytoplasm. It is found in the cytosol. It localises to the late endosome membrane. The protein resides in the midbody. Its function is as follows. Probable core component of the endosomal sorting required for transport complex III (ESCRT-III) which is involved in multivesicular bodies (MVBs) formation and sorting of endosomal cargo proteins into MVBs. MVBs contain intraluminal vesicles (ILVs) that are generated by invagination and scission from the limiting membrane of the endosome and mostly are delivered to lysosomes enabling degradation of membrane proteins, such as stimulated growth factor receptors, lysosomal enzymes and lipids. The protein is Charged multivesicular body protein 4b (CHMP4B) of Gallus gallus (Chicken).